The chain runs to 611 residues: DNA mismatch repair protein MutL (611 aa).

It belongs to the DNA mismatch repair MutL/HexB family.

Its function is as follows. This protein is involved in the repair of mismatches in DNA. It is required for dam-dependent methyl-directed DNA mismatch repair. May act as a 'molecular matchmaker', a protein that promotes the formation of a stable complex between two or more DNA-binding proteins in an ATP-dependent manner without itself being part of a final effector complex. The sequence is that of DNA mismatch repair protein MutL from Borrelia garinii subsp. bavariensis (strain ATCC BAA-2496 / DSM 23469 / PBi) (Borreliella bavariensis).